Here is a 176-residue protein sequence, read N- to C-terminus: Large ribosomal subunit protein uL6 (176 aa).

It belongs to the universal ribosomal protein uL6 family. Part of the 50S ribosomal subunit.

This protein binds to the 23S rRNA, and is important in its secondary structure. It is located near the subunit interface in the base of the L7/L12 stalk, and near the tRNA binding site of the peptidyltransferase center. The chain is Large ribosomal subunit protein uL6 from Burkholderia multivorans (strain ATCC 17616 / 249).